The sequence spans 492 residues: Aspartyl/glutamyl-tRNA(Asn/Gln) amidotransferase subunit B (492 aa).

It belongs to the GatB/GatE family. GatB subfamily. As to quaternary structure, heterotrimer of A, B and C subunits.

It carries out the reaction L-glutamyl-tRNA(Gln) + L-glutamine + ATP + H2O = L-glutaminyl-tRNA(Gln) + L-glutamate + ADP + phosphate + H(+). The enzyme catalyses L-aspartyl-tRNA(Asn) + L-glutamine + ATP + H2O = L-asparaginyl-tRNA(Asn) + L-glutamate + ADP + phosphate + 2 H(+). Functionally, allows the formation of correctly charged Asn-tRNA(Asn) or Gln-tRNA(Gln) through the transamidation of misacylated Asp-tRNA(Asn) or Glu-tRNA(Gln) in organisms which lack either or both of asparaginyl-tRNA or glutaminyl-tRNA synthetases. The reaction takes place in the presence of glutamine and ATP through an activated phospho-Asp-tRNA(Asn) or phospho-Glu-tRNA(Gln). The chain is Aspartyl/glutamyl-tRNA(Asn/Gln) amidotransferase subunit B from Dehalococcoides mccartyi (strain CBDB1).